Consider the following 594-residue polypeptide: Arginine--tRNA ligase (594 aa).

Residues 139–149 (ANPTGPLHVGH) carry the 'HIGH' region motif.

This sequence belongs to the class-I aminoacyl-tRNA synthetase family. As to quaternary structure, monomer.

It is found in the cytoplasm. The enzyme catalyses tRNA(Arg) + L-arginine + ATP = L-arginyl-tRNA(Arg) + AMP + diphosphate. This is Arginine--tRNA ligase from Burkholderia pseudomallei (strain 1106a).